The following is a 346-amino-acid chain: Putative toluene-4-sulfonate monooxygenase system iron-sulfur subunit TsaM2 (346 aa).

One can recognise a Rieske domain in the interval 7–108; sequence WYVAGMATDC…LVERHGLLWI (102 aa). [2Fe-2S] cluster contacts are provided by Cys-47, His-49, Cys-66, and His-69.

As to quaternary structure, homotetramer. Part of the p-toluenesulfonate methyl-monooxygenase complex TsaBM, comprising the reductase TsaB and the oxygenase TsaM. The cofactor is [2Fe-2S] cluster.

The catalysed reaction is toluene-4-sulfonate + NADH + O2 + H(+) = 4-(hydroxymethyl)benzenesulfonate + NAD(+) + H2O. Its function is as follows. Involved in the toluene-4-sulfonate degradation pathway. Does not discriminate between the sulfonate and the carboxyl substituents and can also be involved in the p-toluenecarboxylate degradation pathway. The polypeptide is Putative toluene-4-sulfonate monooxygenase system iron-sulfur subunit TsaM2 (tsaM2) (Comamonas testosteroni (Pseudomonas testosteroni)).